Consider the following 341-residue polypeptide: Aspartate carbamoyltransferase catalytic subunit (341 aa).

Positions 74 and 75 each coordinate carbamoyl phosphate. K102 lines the L-aspartate pocket. Residues R124, H152, and Q155 each coordinate carbamoyl phosphate. The L-aspartate site is built by R190 and R244. G285 and P286 together coordinate carbamoyl phosphate.

The protein belongs to the aspartate/ornithine carbamoyltransferase superfamily. ATCase family. In terms of assembly, heterododecamer (2C3:3R2) of six catalytic PyrB chains organized as two trimers (C3), and six regulatory PyrI chains organized as three dimers (R2).

The enzyme catalyses carbamoyl phosphate + L-aspartate = N-carbamoyl-L-aspartate + phosphate + H(+). It participates in pyrimidine metabolism; UMP biosynthesis via de novo pathway; (S)-dihydroorotate from bicarbonate: step 2/3. Functionally, catalyzes the condensation of carbamoyl phosphate and aspartate to form carbamoyl aspartate and inorganic phosphate, the committed step in the de novo pyrimidine nucleotide biosynthesis pathway. The protein is Aspartate carbamoyltransferase catalytic subunit of Novosphingobium aromaticivorans (strain ATCC 700278 / DSM 12444 / CCUG 56034 / CIP 105152 / NBRC 16084 / F199).